We begin with the raw amino-acid sequence, 55 residues long: Large ribosomal subunit protein bL33 (55 aa).

It belongs to the bacterial ribosomal protein bL33 family.

The sequence is that of Large ribosomal subunit protein bL33 (rpmG) from Nitrobacter hamburgensis (strain DSM 10229 / NCIMB 13809 / X14).